A 158-amino-acid chain; its full sequence is Ribosome maturation factor RimP (158 aa).

It belongs to the RimP family.

The protein localises to the cytoplasm. Its function is as follows. Required for maturation of 30S ribosomal subunits. This chain is Ribosome maturation factor RimP, found in Streptococcus uberis (strain ATCC BAA-854 / 0140J).